A 190-amino-acid chain; its full sequence is Potassium-transporting ATPase KdpC subunit (190 aa).

A helical transmembrane segment spans residues 13–33 (VGFLLLTLMCGVVYPGIVTIF).

This sequence belongs to the KdpC family. In terms of assembly, the system is composed of three essential subunits: KdpA, KdpB and KdpC.

The protein localises to the cell membrane. Part of the high-affinity ATP-driven potassium transport (or Kdp) system, which catalyzes the hydrolysis of ATP coupled with the electrogenic transport of potassium into the cytoplasm. This subunit acts as a catalytic chaperone that increases the ATP-binding affinity of the ATP-hydrolyzing subunit KdpB by the formation of a transient KdpB/KdpC/ATP ternary complex. The polypeptide is Potassium-transporting ATPase KdpC subunit (Listeria monocytogenes serotype 4b (strain CLIP80459)).